A 517-amino-acid polypeptide reads, in one-letter code: Aldehyde dehydrogenase X, mitochondrial (517 aa).

The N-terminal 17 residues, 1–17 (MLRFLAPRLLSLQGRTA), are a transit peptide targeting the mitochondrion. Lysine 51 bears the N6-acetyllysine mark. The residue at position 52 (lysine 52) is an N6-acetyllysine; alternate. N6-succinyllysine; alternate is present on lysine 52. Position 81 is an N6-succinyllysine (lysine 81). NAD(+) is bound at residue 262-267 (GSTEVG). Residue glutamate 285 is the Proton acceptor of the active site. Cysteine 319 acts as the Nucleophile in catalysis. An N6-acetyllysine; alternate mark is found at lysine 364, lysine 383, lysine 399, lysine 414, and lysine 426. Lysine 364, lysine 383, lysine 399, lysine 414, and lysine 426 each carry N6-succinyllysine; alternate. The residue at position 429 (lysine 429) is an N6-acetyllysine.

The protein belongs to the aldehyde dehydrogenase family. Homotetramer.

It localises to the mitochondrion matrix. It carries out the reaction an aldehyde + NAD(+) + H2O = a carboxylate + NADH + 2 H(+). It participates in alcohol metabolism; ethanol degradation; acetate from ethanol: step 2/2. ALDHs play a major role in the detoxification of alcohol-derived acetaldehyde. They are involved in the metabolism of corticosteroids, biogenic amines, neurotransmitters, and lipid peroxidation. The sequence is that of Aldehyde dehydrogenase X, mitochondrial (ALDH1B1) from Pongo abelii (Sumatran orangutan).